The sequence spans 362 residues: Endolytic peptidoglycan transglycosylase RlpA (362 aa).

A signal peptide spans M1 to A17. C18 carries N-palmitoyl cysteine lipidation. C18 carries S-diacylglycerol cysteine lipidation. The segment at P198–A276 is disordered. A compositionally biased stretch (low complexity) spans P262–A276. The region spanning Q285–A361 is the SPOR domain.

The protein belongs to the RlpA family.

The protein localises to the cell membrane. In terms of biological role, lytic transglycosylase with a strong preference for naked glycan strands that lack stem peptides. The protein is Endolytic peptidoglycan transglycosylase RlpA of Escherichia coli (strain K12).